Consider the following 354-residue polypeptide: Methionine aminotransferase BCAT4 (354 aa).

K198 bears the N6-(pyridoxal phosphate)lysine mark.

Belongs to the class-IV pyridoxal-phosphate-dependent aminotransferase family. Pyridoxal 5'-phosphate is required as a cofactor. In terms of tissue distribution, mostly expressed in phloem.

The protein localises to the cytoplasm. It carries out the reaction a 2-oxocarboxylate + L-methionine = 4-methylsulfanyl-2-oxobutanoate + an L-alpha-amino acid. In terms of biological role, converts 2-oxo acids to branched-chain amino acids. Shows activity with L-Leu, L-Ile and L-Val as amino donors and alpha-keto-glutarate as an amino acceptor, but no activity for D-isomers of Leu, Ile, Val, Asp, Glu or Ala. Acts on methionine and its derivatives and the corresponding 2-oxo acids. Catalyzes the initial deamination of methionine to 4-methylthio-2-oxobutyrate as well as the transamination of other typical intermediates of the methionine chain elongation pathway. The polypeptide is Methionine aminotransferase BCAT4 (BCAT4) (Arabidopsis thaliana (Mouse-ear cress)).